Consider the following 258-residue polypeptide: UPF0246 protein Pnuc_0753 (258 aa).

It belongs to the UPF0246 family.

The protein is UPF0246 protein Pnuc_0753 of Polynucleobacter asymbioticus (strain DSM 18221 / CIP 109841 / QLW-P1DMWA-1) (Polynucleobacter necessarius subsp. asymbioticus).